The chain runs to 390 residues: Chorismate synthase (390 aa).

The NADP(+) site is built by arginine 39 and arginine 45. FMN contacts are provided by residues 132 to 134 (RSS), 253 to 254 (NA), glycine 298, 313 to 317 (KPIPT), and arginine 339.

The protein belongs to the chorismate synthase family. Homotetramer. FMNH2 serves as cofactor.

The enzyme catalyses 5-O-(1-carboxyvinyl)-3-phosphoshikimate = chorismate + phosphate. Its pathway is metabolic intermediate biosynthesis; chorismate biosynthesis; chorismate from D-erythrose 4-phosphate and phosphoenolpyruvate: step 7/7. Its function is as follows. Catalyzes the anti-1,4-elimination of the C-3 phosphate and the C-6 proR hydrogen from 5-enolpyruvylshikimate-3-phosphate (EPSP) to yield chorismate, which is the branch point compound that serves as the starting substrate for the three terminal pathways of aromatic amino acid biosynthesis. This reaction introduces a second double bond into the aromatic ring system. In Bacillus velezensis (strain DSM 23117 / BGSC 10A6 / LMG 26770 / FZB42) (Bacillus amyloliquefaciens subsp. plantarum), this protein is Chorismate synthase.